The chain runs to 83 residues: Small ribosomal subunit protein bS16 (83 aa).

The protein belongs to the bacterial ribosomal protein bS16 family.

This chain is Small ribosomal subunit protein bS16, found in Pseudomonas aeruginosa (strain UCBPP-PA14).